We begin with the raw amino-acid sequence, 577 residues long: Urease subunit alpha (577 aa).

In terms of domain architecture, Urease spans 136–577 (GAIDCHVHLI…LPMAQRYFLF (442 aa)). Residues His-141, His-143, and Lys-224 each contribute to the Ni(2+) site. Lys-224 is modified (N6-carboxylysine). A substrate-binding site is contributed by His-226. Residues His-253 and His-279 each contribute to the Ni(2+) site. His-327 acts as the Proton donor in catalysis. Asp-367 contributes to the Ni(2+) binding site.

This sequence belongs to the metallo-dependent hydrolases superfamily. Urease alpha subunit family. In terms of assembly, heterotrimer of UreA (gamma), UreB (beta) and UreC (alpha) subunits. Three heterotrimers associate to form the active enzyme. Ni cation serves as cofactor. In terms of processing, carboxylation allows a single lysine to coordinate two nickel ions.

It localises to the cytoplasm. The enzyme catalyses urea + 2 H2O + H(+) = hydrogencarbonate + 2 NH4(+). It functions in the pathway nitrogen metabolism; urea degradation; CO(2) and NH(3) from urea (urease route): step 1/1. This Mycobacterium marinum (strain ATCC BAA-535 / M) protein is Urease subunit alpha.